The primary structure comprises 536 residues: Glyco-Gag protein (536 aa).

The Cytoplasmic segment spans residues 1–54 (MSGASSGTATGARLFGISSVLGEYRVLIGDEGAGPSRSPSEVSFSVWYRSRAAR). A helical membrane pass occupies residues 55–75 (LVILCLVASFLVPCLTFLIAE). Topologically, residues 76–536 (TVMGQTVTTP…TQNRNKDREE (461 aa)) are extracellular. N-linked (GlcNAc...) asparagine; by host glycosylation occurs at Asn137. 2 disordered regions span residues 174 to 284 (VRPF…NNRP) and 494 to 536 (ETPE…DREE). The span at 177 to 198 (FLPPPKPPTPLPQPLSPQPSAP) shows a compositional bias: pro residues. Low complexity predominate over residues 199–209 (PTSSLYPVLPK). Composition is skewed to pro residues over residues 210–223 (TNPP…PDPS) and 233–246 (EPPP…PPPS). Positions 494–511 (ETPEEREERLWQRQEERD) are enriched in basic and acidic residues.

In terms of processing, glycosylated by host. Cleaved by host near the middle of the molecule, releasing the c-terminal half containing capsid and nucleoprotein domains op GAG.

The protein resides in the host cell membrane. Its function is as follows. Plays a role in viral particle release. Presumably acts by facilitating the fission of the virion bud at the cell surface. The chain is Glyco-Gag protein from Feline sarcoma virus (strain McDonough).